The chain runs to 368 residues: Alanine racemase (368 aa).

Lys-40 acts as the Proton acceptor; specific for D-alanine in catalysis. Position 40 is an N6-(pyridoxal phosphate)lysine (Lys-40). A substrate-binding site is contributed by Arg-134. The active-site Proton acceptor; specific for L-alanine is Tyr-263. Met-310 is a substrate binding site.

This sequence belongs to the alanine racemase family. Pyridoxal 5'-phosphate serves as cofactor.

The catalysed reaction is L-alanine = D-alanine. Its pathway is amino-acid biosynthesis; D-alanine biosynthesis; D-alanine from L-alanine: step 1/1. Catalyzes the interconversion of L-alanine and D-alanine. May also act on other amino acids. The polypeptide is Alanine racemase (alr) (Listeria monocytogenes serotype 1/2a (strain 10403S)).